Here is a 24-residue protein sequence, read N- to C-terminus: Calreticulin (24 aa).

Belongs to the calreticulin family. In terms of assembly, monomer. Component of an EIF2 complex at least composed of CELF1/CUGBP1, CALR, CALR3, EIF2S1, EIF2S2, HSP90B1 and HSPA5. Interacts with PDIA3/ERp57 and SPACA9. Interacts with TRIM21. Interacts with NR3C1. Interacts with PPIB. Interacts (via P-domain) with PDIA5. Interacts with CLCC1. In terms of tissue distribution, pancreas.

Its subcellular location is the endoplasmic reticulum lumen. The protein resides in the cytoplasm. It is found in the cytosol. It localises to the cytolytic granule. The protein localises to the secreted. Its subcellular location is the extracellular space. The protein resides in the extracellular matrix. It is found in the cell surface. It localises to the sarcoplasmic reticulum lumen. The protein localises to the cytoplasmic vesicle. Its subcellular location is the secretory vesicle. The protein resides in the cortical granule. In terms of biological role, calcium-binding chaperone that promotes folding, oligomeric assembly and quality control in the endoplasmic reticulum (ER) via the calreticulin/calnexin cycle. This lectin interacts transiently with almost all of the monoglucosylated glycoproteins that are synthesized in the ER. Interacts with the DNA-binding domain of NR3C1 and mediates its nuclear export. Involved in maternal gene expression regulation. May participate in oocyte maturation via the regulation of calcium homeostasis. Present in the cortical granules of non-activated oocytes, is exocytosed during the cortical reaction in response to oocyte activation and might participate in the block to polyspermy. The polypeptide is Calreticulin (CALR) (Canis lupus familiaris (Dog)).